A 527-amino-acid chain; its full sequence is UDP-glucuronosyltransferase 2A1 (527 aa).

Residues 1–20 (MLNNLLLFSLQISLIGTTLG) form the signal peptide. Topologically, residues 21–491 (GNVLIWPMEG…TWFQYHSLDV (471 aa)) are lumenal. Residues Asn49, Leu313, and Asn347 are each glycosylated (N-linked (GlcNAc...) asparagine). A helical transmembrane segment spans residues 492-512 (IGFLLVCVTTAIFLVIQCCLF). Residues 513 to 527 (SCQKFGKIGKKKKRE) are Cytoplasmic-facing.

It belongs to the UDP-glycosyltransferase family. Olfactory epithelium, brain and fetal lung. Not present in liver.

Its subcellular location is the membrane. It localises to the endoplasmic reticulum membrane. The enzyme catalyses glucuronate acceptor + UDP-alpha-D-glucuronate = acceptor beta-D-glucuronoside + UDP + H(+). The catalysed reaction is 16beta,17beta-estriol + UDP-alpha-D-glucuronate = 16beta,17beta-estriol 16-O-(beta-D-glucuronate) + UDP + H(+). It carries out the reaction 16alpha,17alpha-estriol + UDP-alpha-D-glucuronate = 16alpha,17alpha-estriol 16-O-(beta-D-glucuronate) + UDP + H(+). It catalyses the reaction 17alpha-estradiol + UDP-alpha-D-glucuronate = 17alpha-estradiol 17-O-(beta-D-glucuronate) + UDP + H(+). The enzyme catalyses 17alpha-estradiol + UDP-alpha-D-glucuronate = 17alpha-estradiol 3-O-(beta-D-glucuronate) + UDP + H(+). The catalysed reaction is 17beta-estradiol + UDP-alpha-D-glucuronate = 17beta-estradiol 3-O-(beta-D-glucuronate) + UDP + H(+). It carries out the reaction 17beta-estradiol + UDP-alpha-D-glucuronate = 17beta-estradiol 17-O-(beta-D-glucuronate) + UDP + H(+). It catalyses the reaction testosterone + UDP-alpha-D-glucuronate = testosterone 17-O-(beta-D-glucuronate) + UDP + H(+). The enzyme catalyses epitestosterone + UDP-alpha-D-glucuronate = epitestosterone 17-O-(beta-D-glucuronate) + UDP + H(+). The catalysed reaction is lithocholate + UDP-alpha-D-glucuronate = lithocholoyl-3-O-(beta-D-glucuronate) + UDP + H(+). It carries out the reaction lithocholate + UDP-alpha-D-glucuronate = lithocholoyl-24-O-(beta-D-glucuronate) + UDP. It catalyses the reaction deoxycholate + UDP-alpha-D-glucuronate = deoxycholoyl-24-O-(beta-D-glucuronate) + UDP. The enzyme catalyses hyodeoxycholate + UDP-alpha-D-glucuronate = hyodeoxycholoyl-24-O-(beta-D-glucuronate) + UDP. The catalysed reaction is hyocholate + UDP-alpha-D-glucuronate = hyocholoyl-24-O-(beta-D-glucuronate) + UDP. In terms of biological role, UDP-glucuronosyltransferase (UGT) that catalyzes phase II biotransformation reactions in which lipophilic substrates are conjugated with glucuronic acid to increase the metabolite's water solubility, thereby facilitating excretion into either the urine or bile. Essential for the elimination and detoxification of drugs, xenobiotics and endogenous compounds. Catalyzes the glucuronidation of endogenous steroid hormones such as androgens (testosterone and epitestosterone) and estrogens (estradiol and epiestriol). Contributes to bile acid (BA) detoxification by catalyzing the glucuronidation of BA substrates, which are natural detergents for dietary lipids absorption. Shows a high affinity to aliphatic odorants such as citronellol as well as olfactory tissue specificity, and therefore may be involved in olfaction. Shows a potential role in detoxification of toxic waste compounds in the amniotic fluid before birth, and air-born chemical after birth. The sequence is that of UDP-glucuronosyltransferase 2A1 from Homo sapiens (Human).